The primary structure comprises 844 residues: Translation initiation factor IF-2 (844 aa).

Positions 120–132 are enriched in polar residues; it reads RNSVNLVQPQQEK. The disordered stretch occupies residues 120–220; the sequence is RNSVNLVQPQ…SGKGFKKANP (101 aa). Over residues 161 to 175 the composition is skewed to basic and acidic residues; that stretch reads DEEKSSEDKSTESKN. The segment covering 205–219 has biased composition (basic residues); sequence SKAKKASGKGFKKAN. One can recognise a tr-type G domain in the interval 343–510; it reads SRAPVVTIMG…AVLLQSEVLE (168 aa). The G1 stretch occupies residues 352–359; the sequence is GHVDHGKT. GTP is bound at residue 352–359; sequence GHVDHGKT. Residues 377–381 are G2; the sequence is GITQH. The interval 398–401 is G3; sequence DTPG. GTP-binding positions include 398–402 and 452–455; these read DTPGH and NKID. Residues 452–455 are G4; that stretch reads NKID. A G5 region spans residues 488–490; sequence SAK.

The protein belongs to the TRAFAC class translation factor GTPase superfamily. Classic translation factor GTPase family. IF-2 subfamily.

Its subcellular location is the cytoplasm. Its function is as follows. One of the essential components for the initiation of protein synthesis. Protects formylmethionyl-tRNA from spontaneous hydrolysis and promotes its binding to the 30S ribosomal subunits. Also involved in the hydrolysis of GTP during the formation of the 70S ribosomal complex. This is Translation initiation factor IF-2 from Francisella philomiragia subsp. philomiragia (strain ATCC 25017 / CCUG 19701 / FSC 153 / O#319-036).